An 885-amino-acid polypeptide reads, in one-letter code: DNA-directed RNA polymerase subunit Rpo1N (885 aa).

The Zn(2+) site is built by cysteine 60, cysteine 63, cysteine 70, histidine 73, cysteine 100, cysteine 103, cysteine 150, and cysteine 153. Aspartate 464, aspartate 466, and aspartate 468 together coordinate Mg(2+).

It belongs to the RNA polymerase beta' chain family. Part of the RNA polymerase complex. Mg(2+) serves as cofactor. Zn(2+) is required as a cofactor.

Its subcellular location is the cytoplasm. It carries out the reaction RNA(n) + a ribonucleoside 5'-triphosphate = RNA(n+1) + diphosphate. Functionally, DNA-dependent RNA polymerase (RNAP) catalyzes the transcription of DNA into RNA using the four ribonucleoside triphosphates as substrates. Forms the clamp head domain. The protein is DNA-directed RNA polymerase subunit Rpo1N of Thermoplasma acidophilum (strain ATCC 25905 / DSM 1728 / JCM 9062 / NBRC 15155 / AMRC-C165).